Consider the following 232-residue polypeptide: Small ribosomal subunit protein uS3 (232 aa).

The KH type-2 domain maps to valine 39–arginine 107.

The protein belongs to the universal ribosomal protein uS3 family. In terms of assembly, part of the 30S ribosomal subunit. Forms a tight complex with proteins S10 and S14.

In terms of biological role, binds the lower part of the 30S subunit head. Binds mRNA in the 70S ribosome, positioning it for translation. This Aliivibrio fischeri (strain MJ11) (Vibrio fischeri) protein is Small ribosomal subunit protein uS3.